We begin with the raw amino-acid sequence, 284 residues long: Formamidopyrimidine-DNA glycosylase (284 aa).

Pro-2 acts as the Schiff-base intermediate with DNA in catalysis. The active-site Proton donor is the Glu-3. Lys-58 functions as the Proton donor; for beta-elimination activity in the catalytic mechanism. The DNA site is built by His-97, Arg-120, and Arg-165. Residues 250-284 (FVYDRAGEPCKVCGTPVRQIVQGQRSTFYCTHCQH) form an FPG-type zinc finger. The active-site Proton donor; for delta-elimination activity is the Arg-274.

Belongs to the FPG family. In terms of assembly, monomer. Requires Zn(2+) as cofactor.

It carries out the reaction Hydrolysis of DNA containing ring-opened 7-methylguanine residues, releasing 2,6-diamino-4-hydroxy-5-(N-methyl)formamidopyrimidine.. The catalysed reaction is 2'-deoxyribonucleotide-(2'-deoxyribose 5'-phosphate)-2'-deoxyribonucleotide-DNA = a 3'-end 2'-deoxyribonucleotide-(2,3-dehydro-2,3-deoxyribose 5'-phosphate)-DNA + a 5'-end 5'-phospho-2'-deoxyribonucleoside-DNA + H(+). Involved in base excision repair of DNA damaged by oxidation or by mutagenic agents. Acts as a DNA glycosylase that recognizes and removes damaged bases. Has a preference for oxidized purines, such as 7,8-dihydro-8-oxoguanine (8-oxoG). Has AP (apurinic/apyrimidinic) lyase activity and introduces nicks in the DNA strand. Cleaves the DNA backbone by beta-delta elimination to generate a single-strand break at the site of the removed base with both 3'- and 5'-phosphates. This chain is Formamidopyrimidine-DNA glycosylase, found in Cupriavidus pinatubonensis (strain JMP 134 / LMG 1197) (Cupriavidus necator (strain JMP 134)).